The chain runs to 874 residues: Alanine--tRNA ligase (874 aa).

Positions 564, 568, 665, and 669 each coordinate Zn(2+).

It belongs to the class-II aminoacyl-tRNA synthetase family. The cofactor is Zn(2+).

It is found in the cytoplasm. The enzyme catalyses tRNA(Ala) + L-alanine + ATP = L-alanyl-tRNA(Ala) + AMP + diphosphate. Its function is as follows. Catalyzes the attachment of alanine to tRNA(Ala) in a two-step reaction: alanine is first activated by ATP to form Ala-AMP and then transferred to the acceptor end of tRNA(Ala). Also edits incorrectly charged Ser-tRNA(Ala) and Gly-tRNA(Ala) via its editing domain. The polypeptide is Alanine--tRNA ligase (Burkholderia thailandensis (strain ATCC 700388 / DSM 13276 / CCUG 48851 / CIP 106301 / E264)).